The sequence spans 125 residues: uncharacterized protein (125 aa).

The protein resides in the plastid. This is an uncharacterized protein from Euglena longa (Euglenophycean alga).